We begin with the raw amino-acid sequence, 250 residues long: Aquaporin TIP2-2 (250 aa).

The next 2 membrane-spanning stretches (helical) occupy residues 22–42 (VAEF…AIAF) and 54–74 (AGLV…VSVA). Positions 83 to 85 (NPA) match the NPA 1 motif. A run of 3 helical transmembrane segments spans residues 97–119 (TVLT…CLLL), 142–162 (GVVF…ATAA), and 169–189 (LGTI…LAAG). The NPA 2 motif lies at 197–199 (NPA). A helical membrane pass occupies residues 218–238 (WVGPLIGGGLAGLVYGDVFIG).

It belongs to the MIP/aquaporin (TC 1.A.8) family. TIP (TC 1.A.8.10) subfamily.

The protein localises to the vacuole membrane. Aquaporins facilitate the transport of water and small neutral solutes across cell membranes. The sequence is that of Aquaporin TIP2-2 (TIP2-2) from Zea mays (Maize).